The primary structure comprises 451 residues: ACT domain-containing protein ACR4 (451 aa).

4 ACT domains span residues 35–118 (VIRV…VIPS), 123–200 (VIEL…NTPR), 259–335 (VVTV…VSEG), and 337–416 (KLEL…QEQQ). The tract at residues 409–428 (KNNPQEQQQRQKSPSHESPT) is disordered. Over residues 410 to 420 (NNPQEQQQRQK) the composition is skewed to polar residues.

In terms of tissue distribution, highly expressed in flowers and at lower levels in leaves and siliques.

May bind amino acids. The polypeptide is ACT domain-containing protein ACR4 (Arabidopsis thaliana (Mouse-ear cress)).